Consider the following 286-residue polypeptide: Spermidine/putrescine transport system permease protein PotB (286 aa).

The Cytoplasmic portion of the chain corresponds to 1–13 (MKIINNKFQKITV). The chain crosses the membrane as a helical span at residues 14–33 (AIIFSWLIFFVLIPNLLVLA). The Periplasmic segment spans residues 34-71 (VSFLTRDGSNFYAFPITIENYTNLFNPLYAQVVWNSLS). The region spanning 66–274 (VWNSLSMSGI…MALLIFVYYR (209 aa)) is the ABC transmembrane type-1 domain. A helical transmembrane segment spans residues 72–91 (MSGIATIICLLIGYPFAFMM). At 92 to 100 (SKIHPKYRP) the chain is on the cytoplasmic side. Residues 101 to 120 (LLLFLVVLPFWTNSLIRIYG) form a helical membrane-spanning segment. Over 121–151 (MKVFLGVKGILNTMLIDMGILSAPIRILNTE) the chain is Periplasmic. A helical transmembrane segment spans residues 152–171 (IAVIIGLVYLLLPFMILPLY). The Cytoplasmic portion of the chain corresponds to 172 to 199 (SAIEKLDNRLLEAARDLGANTFQRFFRV). The helical transmembrane segment at 200 to 219 (ILPLTMPGIIAGCLLVLLPA) threads the bilayer. Residues 220 to 252 (MGMFYVADLLGGAKVLLVGNVIKSEFLISRNWP) are Periplasmic-facing. The helical transmembrane segment at 253 to 272 (FGSAVSIGLTVLMALLIFVY) threads the bilayer. The Cytoplasmic segment spans residues 273–286 (YRANKLLNRKVELE).

It belongs to the binding-protein-dependent transport system permease family. CysTW subfamily.

It localises to the cell inner membrane. In terms of biological role, required for the activity of the bacterial periplasmic transport system of putrescine and spermidine. The chain is Spermidine/putrescine transport system permease protein PotB (potB) from Haemophilus influenzae (strain ATCC 51907 / DSM 11121 / KW20 / Rd).